The sequence spans 452 residues: tRNA modification GTPase MnmE (452 aa).

(6S)-5-formyl-5,6,7,8-tetrahydrofolate-binding residues include Arg23, Glu81, and Lys120. Residues 217-373 (GIKTAIIGQT…LVLRINQMYL (157 aa)) enclose the TrmE-type G domain. Asn227 contributes to the K(+) binding site. GTP is bound by residues 227 to 232 (NVGKSS), 246 to 252 (TDIPGTT), and 271 to 274 (DTAG). Position 231 (Ser231) interacts with Mg(2+). K(+) is bound by residues Thr246, Ile248, and Thr251. Mg(2+) is bound at residue Thr252. (6S)-5-formyl-5,6,7,8-tetrahydrofolate is bound at residue Lys452.

Belongs to the TRAFAC class TrmE-Era-EngA-EngB-Septin-like GTPase superfamily. TrmE GTPase family. In terms of assembly, homodimer. Heterotetramer of two MnmE and two MnmG subunits. It depends on K(+) as a cofactor.

It localises to the cytoplasm. Functionally, exhibits a very high intrinsic GTPase hydrolysis rate. Involved in the addition of a carboxymethylaminomethyl (cmnm) group at the wobble position (U34) of certain tRNAs, forming tRNA-cmnm(5)s(2)U34. This chain is tRNA modification GTPase MnmE, found in Mycoplasma mycoides subsp. mycoides SC (strain CCUG 32753 / NCTC 10114 / PG1).